The primary structure comprises 591 residues: MTQGKIIKVSGPLVIASGMQEANIQDICRVGKLGLIGEIIEMRRDQASIQVYEETSGLGPGEPVVTTGEPLSVELGPGLISQMFDGIQRPLDRFKLATHNDFLVRGVEVPSLDRDIKWHFDSTISIGQKVSTGDILGTVKETEVVNHKIMVPYGISGEVVSIASGDFTIDEVVYEIKKLDGSFYKGTLMQKWPVRKARPVSKRLIPEEPLITGQRVIDTFFPVTKGGAAAVPGPFGAGKTVVQHQVAKFANVDIVIYVGCGERGNEMTDVLNEFPELIDPNTGQSIMQRTVLIANTSNMPVAAREASIYTGITMAEYFRDMGYSVAIMADSTSRWAEALREMSGRLEEMPGDEGYPAYLGSRIAEYYERAGRSQALGLPEREGTITAIGAVSPPGGDISEPVTQNTLRIVKVFWGLDAPLAQRRHFPAINWLTSYSLYKDSVGTYIDDKEKTDWNSKITRAMNYLQRESSLEEIVRLVGIDSLSENERLTMEIAKQIREDYLQQNAFDSVDTFTSFAKQEAMLSNILTFADQANHALELGSYFTEIIEGTVAVRDRMARSKYVSEDRLDEIKIISNEITHQIQLILETGGL.

Residue 233–240 (GPFGAGKT) participates in ATP binding.

The protein belongs to the ATPase alpha/beta chains family.

It carries out the reaction ATP + H2O + 4 H(+)(in) = ADP + phosphate + 5 H(+)(out). Its function is as follows. Produces ATP from ADP in the presence of a proton gradient across the membrane. The V-type alpha chain is a catalytic subunit. The protein is V-type ATP synthase alpha chain of Streptococcus pneumoniae (strain Hungary19A-6).